Here is a 661-residue protein sequence, read N- to C-terminus: Threonine--tRNA ligase (661 aa).

One can recognise a TGS domain in the interval 1–64; that stretch reads MSQAISLTFP…TTGRIEIITR (64 aa). Residues 245-546 form a catalytic region; the sequence is DHRRLGREMD…LIENFAGHMP (302 aa). Residues Cys-341, His-392, and His-523 each coordinate Zn(2+).

The protein belongs to the class-II aminoacyl-tRNA synthetase family. Homodimer. Zn(2+) is required as a cofactor.

The protein resides in the cytoplasm. The catalysed reaction is tRNA(Thr) + L-threonine + ATP = L-threonyl-tRNA(Thr) + AMP + diphosphate + H(+). Functionally, catalyzes the attachment of threonine to tRNA(Thr) in a two-step reaction: L-threonine is first activated by ATP to form Thr-AMP and then transferred to the acceptor end of tRNA(Thr). Also edits incorrectly charged L-seryl-tRNA(Thr). The protein is Threonine--tRNA ligase of Rhizobium johnstonii (strain DSM 114642 / LMG 32736 / 3841) (Rhizobium leguminosarum bv. viciae).